The sequence spans 1374 residues: Y' element ATP-dependent helicase YML133C (1374 aa).

The region spanning 375-552 (EIYMADTPSV…LQRIGLTGLA (178 aa)) is the Helicase ATP-binding domain. 388 to 395 (APPGYGKT) provides a ligand contact to ATP. Residues 609–758 (KLLLALFEIE…EFYGLESKKG (150 aa)) form the Helicase C-terminal domain. Low complexity predominate over residues 832-975 (ANASTNATTN…ATTTESTNAS (144 aa)). The segment at 832–999 (ANASTNATTN…RFHPVTDINK (168 aa)) is disordered. Basic and acidic residues predominate over residues 976–999 (AKEDANKDGNAEDNRFHPVTDINK).

It belongs to the helicase family. Yeast subtelomeric Y' repeat subfamily.

Its function is as follows. Catalyzes DNA unwinding and is involved in telomerase-independent telomere maintenance. This chain is Y' element ATP-dependent helicase YML133C, found in Saccharomyces cerevisiae (strain ATCC 204508 / S288c) (Baker's yeast).